A 279-amino-acid polypeptide reads, in one-letter code: MTKADTIFKENIECILKEGVFSEQARPKYKDGTVANSKYVTGAFSEYDLSKGEFPITTLRPIAIKSAIKEVLWIYQDQSNSLEVLNDKYNVHYWNDWEVGDTGTIGERYGAVVKKHDIINKLLKQLETNPWNRRNIISLWDYQAFEETDGLLPCAFQTMFDVRRVDGEIYLDATLTQRSNDMLVAHHINAMQYVALQMMIAKHFGWKVGKFFYFINNLHIYDNQFEQAQELLRREPSNCQPRLVLNVPDGTNFFDIKAEDFELVDYDPVKPQLKFDLAI.

Arg-133–Arg-134 provides a ligand contact to dUMP. Cys-154 (nucleophile) is an active-site residue. Residues Arg-178 to Asp-181, Asn-189, and His-219 to Tyr-221 each bind dUMP. Position 181 (Asp-181) interacts with (6R)-5,10-methylene-5,6,7,8-tetrahydrofolate. Residue Ala-278 coordinates (6R)-5,10-methylene-5,6,7,8-tetrahydrofolate.

This sequence belongs to the thymidylate synthase family. Bacterial-type ThyA subfamily. In terms of assembly, homodimer.

The protein resides in the cytoplasm. It catalyses the reaction dUMP + (6R)-5,10-methylene-5,6,7,8-tetrahydrofolate = 7,8-dihydrofolate + dTMP. It functions in the pathway pyrimidine metabolism; dTTP biosynthesis. Catalyzes the reductive methylation of 2'-deoxyuridine-5'-monophosphate (dUMP) to 2'-deoxythymidine-5'-monophosphate (dTMP) while utilizing 5,10-methylenetetrahydrofolate (mTHF) as the methyl donor and reductant in the reaction, yielding dihydrofolate (DHF) as a by-product. This enzymatic reaction provides an intracellular de novo source of dTMP, an essential precursor for DNA biosynthesis. The chain is Thymidylate synthase from Streptococcus pneumoniae (strain ATCC 700669 / Spain 23F-1).